Consider the following 194-residue polypeptide: N-acetyltransferase (194 aa).

One can recognise an N-acetyltransferase domain in the interval proline 9 to glutamate 173.

This sequence belongs to the acetyltransferase family. PAT/BAR subfamily.

This Streptomyces griseus protein is N-acetyltransferase (nat).